We begin with the raw amino-acid sequence, 232 residues long: Large ribosomal subunit protein uL1 (232 aa).

The protein belongs to the universal ribosomal protein uL1 family. As to quaternary structure, part of the 50S ribosomal subunit.

Binds directly to 23S rRNA. The L1 stalk is quite mobile in the ribosome, and is involved in E site tRNA release. Functionally, protein L1 is also a translational repressor protein, it controls the translation of the L11 operon by binding to its mRNA. In Roseobacter denitrificans (strain ATCC 33942 / OCh 114) (Erythrobacter sp. (strain OCh 114)), this protein is Large ribosomal subunit protein uL1.